The primary structure comprises 128 residues: LIM domain-containing protein 2 (128 aa).

The residue at position 1 (Met-1) is an N-acetylmethionine. A disordered region spans residues 1–25; it reads MFQAAGAAQATPSHEAKGSSGNSTV. Residues 39-99 enclose the LIM zinc-binding domain; that stretch reads ETCAACQKTV…KPHFQQLFKS (61 aa). Residues Cys-41, Cys-44, His-62, Cys-65, Cys-68, Cys-71, Cys-89, and His-92 each contribute to the Zn(2+) site.

Interacts with ILK.

Its subcellular location is the cytoplasm. It is found in the nucleus. Its function is as follows. Acts as an activator of the protein-kinase ILK, thereby regulating cell motility. The protein is LIM domain-containing protein 2 (Limd2) of Rattus norvegicus (Rat).